We begin with the raw amino-acid sequence, 493 residues long: Probable cytosol aminopeptidase (493 aa).

Mn(2+)-binding residues include lysine 260 and aspartate 265. Lysine 272 is an active-site residue. Mn(2+) is bound by residues aspartate 284, aspartate 343, and glutamate 345. Residue arginine 347 is part of the active site.

The protein belongs to the peptidase M17 family. The cofactor is Mn(2+).

It localises to the cytoplasm. It catalyses the reaction Release of an N-terminal amino acid, Xaa-|-Yaa-, in which Xaa is preferably Leu, but may be other amino acids including Pro although not Arg or Lys, and Yaa may be Pro. Amino acid amides and methyl esters are also readily hydrolyzed, but rates on arylamides are exceedingly low.. The catalysed reaction is Release of an N-terminal amino acid, preferentially leucine, but not glutamic or aspartic acids.. Its function is as follows. Presumably involved in the processing and regular turnover of intracellular proteins. Catalyzes the removal of unsubstituted N-terminal amino acids from various peptides. The polypeptide is Probable cytosol aminopeptidase (Nostoc punctiforme (strain ATCC 29133 / PCC 73102)).